The sequence spans 463 residues: Phosphoglucosamine mutase (463 aa).

The active-site Phosphoserine intermediate is Ser108. Mg(2+)-binding residues include Ser108, Asp247, Asp249, and Asp251. Ser108 carries the post-translational modification Phosphoserine.

It belongs to the phosphohexose mutase family. The cofactor is Mg(2+). Activated by phosphorylation.

The catalysed reaction is alpha-D-glucosamine 1-phosphate = D-glucosamine 6-phosphate. Its function is as follows. Catalyzes the conversion of glucosamine-6-phosphate to glucosamine-1-phosphate. This Nitrosospira multiformis (strain ATCC 25196 / NCIMB 11849 / C 71) protein is Phosphoglucosamine mutase.